A 376-amino-acid polypeptide reads, in one-letter code: MADSNSKHQDSLQSICYKRGSLQLLDQRKLPLETVYLEIKGADDGWHAIRDMVVRGAPAIAIAAALSLAVEVSNLEDFIGTSDDAASFLNSKLDYLVTSRPTAVNLSDAVTKLKGVISNAAATAFEAMSVFQAFLEAAEDMLREDVAANRAIGLYGASFLQSHIKDSKNLSILTHCNTGSLATAGYGTALGVIRSVHAEGILLRAYCTETRPFNQGSRLTAFELVHDNIPATLIADSAAAALMQAGRVDAVIVGADRVAANGDTANKIGTYSLALSAKHHHIPFFVAAPLTSIDLTLSSGQEIVIEERSPKELLNSRGGLGEQVAASGICVWNPAFDVTPADLIAGIITEKGVITKTGDVFDIKDFIHNATSHCCK.

D256 functions as the Proton donor in the catalytic mechanism.

This sequence belongs to the eIF-2B alpha/beta/delta subunits family. MtnA subfamily.

It localises to the cytoplasm. It is found in the nucleus. It catalyses the reaction 5-(methylsulfanyl)-alpha-D-ribose 1-phosphate = 5-(methylsulfanyl)-D-ribulose 1-phosphate. The protein operates within amino-acid biosynthesis; L-methionine biosynthesis via salvage pathway; L-methionine from S-methyl-5-thio-alpha-D-ribose 1-phosphate: step 1/6. Its function is as follows. Catalyzes the interconversion of methylthioribose-1-phosphate (MTR-1-P) into methylthioribulose-1-phosphate (MTRu-1-P). This chain is Methylthioribose-1-phosphate isomerase, found in Vitis vinifera (Grape).